Consider the following 320-residue polypeptide: Olfactory receptor 12D1 (320 aa).

The Extracellular portion of the chain corresponds to 1–23 (MLNTTSVTEFLLLGVTDIQELQP). A glycan (N-linked (GlcNAc...) asparagine) is linked at Asn3. A helical transmembrane segment spans residues 24-44 (FLFVVFLTIYFISVAGNGAIL). Topologically, residues 45-55 (MIVISDPRLHS) are cytoplasmic. Residues 56 to 76 (PMYFFLGNLSCLDICYSSVTL) traverse the membrane as a helical segment. Topologically, residues 77-97 (PKMLQNFLSAHKAISFLGCIS) are extracellular. Cys95 and Cys177 are disulfide-bonded. Residues 98–118 (QLHFFHFLGSTEAMLLAVMAF) traverse the membrane as a helical segment. The Cytoplasmic portion of the chain corresponds to 119 to 141 (DRFVAICKPLRYTVIMNPQLCTQ). A helical membrane pass occupies residues 142 to 162 (MAITIWMIGFFHALLHSLMTS). The Extracellular portion of the chain corresponds to 163-203 (RLNFCGSNRIYHFFCDVKPLLKLACGNTELNQWLLSTVTGT). A helical transmembrane segment spans residues 204-224 (IAMGPFFLTLLSYFYIITHLF). Over 225–238 (FKTHSFSMLRKALS) the chain is Cytoplasmic. Residues 239–259 (TCASHFMVVILLYAPVLFTYI) form a helical membrane-spanning segment. Over 260 to 270 (HHASGTSMDQD) the chain is Extracellular. The chain crosses the membrane as a helical span at residues 271-291 (RITAIMYTVVTPVLNPLIYTL). Residues 292–320 (RNKEVKGAFNRAMKRWLWPKEILKNSSEA) lie on the Cytoplasmic side of the membrane.

The protein belongs to the G-protein coupled receptor 1 family.

The protein resides in the cell membrane. Odorant receptor. The sequence is that of Olfactory receptor 12D1 (OR12D1) from Homo sapiens (Human).